The primary structure comprises 61 residues: Small ribosomal subunit protein uS14 (61 aa).

Positions 24, 27, 40, and 43 each coordinate Zn(2+).

It belongs to the universal ribosomal protein uS14 family. Zinc-binding uS14 subfamily. As to quaternary structure, part of the 30S ribosomal subunit. Contacts proteins S3 and S10. The cofactor is Zn(2+).

In terms of biological role, binds 16S rRNA, required for the assembly of 30S particles and may also be responsible for determining the conformation of the 16S rRNA at the A site. The chain is Small ribosomal subunit protein uS14 from Nautilia profundicola (strain ATCC BAA-1463 / DSM 18972 / AmH).